Consider the following 455-residue polypeptide: Golgi pH regulator (455 aa).

2 helical membrane-spanning segments follow: residues 5–25 (ADSV…WLFF) and 46–66 (VTFA…LGLL). Asn67 carries an N-linked (GlcNAc...) asparagine glycan. 3 consecutive transmembrane segments (helical) span residues 79–99 (LCVI…YFVV), 111–131 (LFSC…GDPF), and 150–170 (VGVI…VNCP). Asn180 carries N-linked (GlcNAc...) asparagine glycosylation. A run of 4 helical transmembrane segments spans residues 290-310 (GYFF…NIVF), 343-363 (ISFI…LITL), 378-398 (VIVL…VLLI), and 425-445 (WFDV…YLAH).

The protein belongs to the Golgi pH regulator (TC 1.A.38) family. In terms of assembly, homotrimer.

It localises to the golgi apparatus membrane. The enzyme catalyses iodide(out) = iodide(in). It carries out the reaction chloride(in) = chloride(out). It catalyses the reaction bromide(in) = bromide(out). The catalysed reaction is fluoride(in) = fluoride(out). Functionally, voltage-gated channel that enables the transfer of anions such as iodide, chloride, bromide and fluoride which may function in counter-ion conductance and participates in Golgi acidification. This is Golgi pH regulator (gpr89-b) from Xenopus laevis (African clawed frog).